Consider the following 142-residue polypeptide: Putative pre-16S rRNA nuclease (142 aa).

It belongs to the YqgF nuclease family.

The protein resides in the cytoplasm. In terms of biological role, could be a nuclease involved in processing of the 5'-end of pre-16S rRNA. The polypeptide is Putative pre-16S rRNA nuclease (Staphylococcus aureus (strain bovine RF122 / ET3-1)).